Consider the following 45-residue polypeptide: Mu-conotoxin-like Cal 12.1.2c (45 aa).

4 disulfide bridges follow: Cys3–Cys16, Cys11–Cys28, Cys18–Cys33, and Cys27–Cys39. Pro23 carries the post-translational modification 4-hydroxyproline. 2 positions are modified to 6'-bromotryptophan: Trp37 and Trp38. Pro40 is modified (4-hydroxyproline). The residue at position 44 (Trp44) is a 6'-bromotryptophan.

Expressed by the venom duct.

The protein resides in the secreted. In terms of biological role, mu-conotoxins block voltage-gated sodium channels. This toxin reversibly blocks voltage-gated sodium channel in cephalopods, with no alteration in the voltage dependence of sodium conductance or on the kinetics of inactivation. The sequence is that of Mu-conotoxin-like Cal 12.1.2c from Californiconus californicus (California cone).